A 172-amino-acid polypeptide reads, in one-letter code: Large ribosomal subunit protein uL10 (172 aa).

The protein belongs to the universal ribosomal protein uL10 family. As to quaternary structure, part of the ribosomal stalk of the 50S ribosomal subunit. The N-terminus interacts with L11 and the large rRNA to form the base of the stalk. The C-terminus forms an elongated spine to which L12 dimers bind in a sequential fashion forming a multimeric L10(L12)X complex.

In terms of biological role, forms part of the ribosomal stalk, playing a central role in the interaction of the ribosome with GTP-bound translation factors. The protein is Large ribosomal subunit protein uL10 of Brucella suis (strain ATCC 23445 / NCTC 10510).